The chain runs to 70 residues: Large ribosomal subunit protein eL43 (70 aa).

The Zn(2+) site is built by C36, C39, C55, and C58. The C4-type zinc-finger motif lies at 36–58 (CPYCKTTGKVIRLASGIWYCKKC).

It belongs to the eukaryotic ribosomal protein eL43 family. Putative zinc-binding subfamily. Part of the 50S ribosomal subunit. The cofactor is Zn(2+).

Functionally, binds to the 23S rRNA. The protein is Large ribosomal subunit protein eL43 of Saccharolobus solfataricus (strain ATCC 35092 / DSM 1617 / JCM 11322 / P2) (Sulfolobus solfataricus).